The chain runs to 867 residues: Protein translocase subunit SecA 1 (867 aa).

Residues glutamine 86, 104–108 (GEGKT), and aspartate 493 each bind ATP.

The protein belongs to the SecA family. In terms of assembly, monomer and homodimer. Part of the essential Sec protein translocation apparatus which comprises SecA, SecYEG and auxiliary proteins SecDF. Other proteins may also be involved.

It localises to the cell membrane. The protein resides in the cytoplasm. It catalyses the reaction ATP + H2O + cellular proteinSide 1 = ADP + phosphate + cellular proteinSide 2.. Its function is as follows. Part of the Sec protein translocase complex. Interacts with the SecYEG preprotein conducting channel. Has a central role in coupling the hydrolysis of ATP to the transfer of proteins into and across the cell membrane, serving as an ATP-driven molecular motor driving the stepwise translocation of polypeptide chains across the membrane. The polypeptide is Protein translocase subunit SecA 1 (Corynebacterium jeikeium (strain K411)).